The chain runs to 1149 residues: FH2 domain-containing protein 1 (1149 aa).

Disordered stretches follow at residues 18–79 (LATA…PPPG), 464–540 (NHDR…SRLS), 554–660 (ESAT…PLLP), and 681–1149 (SPKS…PLQK). 2 stretches are compositionally biased toward pro residues: residues 33-48 (ASPP…PPCP) and 56-79 (PSPP…PPPG). The FH2 domain occupies 88–483 (GYSSLGKKKR…QLQRQKEMEQ (396 aa)). A compositionally biased stretch (basic and acidic residues) spans 464–485 (NHDREEQERKQLQRQKEMEQKR). The segment covering 486-504 (YSWSTGELGSFGRSSSEND) has biased composition (polar residues). A Phosphoserine modification is found at Ser-501. Residues 522-532 (PRPNSPSYRPP) are compositionally biased toward low complexity. Polar residues-rich tracts occupy residues 554–575 (ESAT…SSPR) and 591–604 (SHGP…QASK). 2 positions are modified to phosphoserine: Ser-645 and Ser-655. Residues 681 to 693 (SPKSLEEGSQLTL) are compositionally biased toward polar residues. Basic and acidic residues predominate over residues 784–795 (MDSRAGGDKQEE). The span at 801–822 (GSVSSGAGEAGSSQVSSNSVSS) shows a compositional bias: low complexity. The segment covering 844–856 (PKDRPSRGKDAIA) has biased composition (basic and acidic residues). A compositionally biased stretch (polar residues) spans 926 to 947 (ETPSSTDTPLSRRSSVRGTSDT). The segment at 960 to 1086 (EEPRLPRSSG…VKGGSEDSAS (127 aa)) is MTBD; microtubule-binding domain. Positions 965–974 (PRSSGSISGR) are enriched in low complexity. Polar residues-rich tracts occupy residues 1042–1052 (ARNTVASSSRS) and 1064–1074 (TGLTRTVSQRQ). The segment covering 1123–1134 (GTTERSSLRLKD) has biased composition (basic and acidic residues).

In terms of assembly, interacts with CEP170. Brain, heart and lung (at protein level).

Its subcellular location is the golgi apparatus. It localises to the cell projection. The protein localises to the cilium. Its function is as follows. Microtubule-associated formin which regulates both actin and microtubule dynamics. Induces microtubule acetylation and stabilization and actin stress fiber formation. Regulates Golgi ribbon formation. Required for normal cilia assembly. Early in cilia assembly, may assist in the maturation and positioning of the centrosome/basal body, and once cilia assembly has initiated, may also promote cilia elongation by inhibiting disassembly. This is FH2 domain-containing protein 1 (Fhdc1) from Mus musculus (Mouse).